Reading from the N-terminus, the 351-residue chain is Increased glyphosate resistance protein (351 aa).

Residues 1–18 (MHREDDSTSTGRREERLS) show a composition bias toward basic and acidic residues. The disordered stretch occupies residues 1–29 (MHREDDSTSTGRREERLSTGKGDSLQPGP).

Functionally, confers an increase in glyphosate resistance when expressed in E.coli. The polypeptide is Increased glyphosate resistance protein (Pseudomonas sp. (strain PG2982)).